Reading from the N-terminus, the 822-residue chain is Penicillin-binding protein 1A (822 aa).

Topologically, residues 1–5 are cytoplasmic; that stretch reads MRLLK. Residues 6-26 traverse the membrane as a helical; Signal-anchor for type II membrane protein segment; the sequence is FLWWTCVTLICGVLLSFSGAY. Residues 27–822 are Periplasmic-facing; it reads LYLSPSLPSV…DDEGAPIDLF (796 aa). The tract at residues 48–216 is transglycosylase; it reads LKVYSEDGKL…SRYNPLVNPT (169 aa). Glu86 (proton donor; for transglycosylase activity) is an active-site residue. A transpeptidase region spans residues 403-744; the sequence is IRVQRQEDGT…GTVALPIWIR (342 aa). Catalysis depends on Ser461, which acts as the Acyl-ester intermediate; for transpeptidase activity. Disordered regions lie at residues 614-654 and 790-822; these read AADA…FEPT and KNED…IDLF. Positions 812 to 822 are enriched in acidic residues; it reads PDDEGAPIDLF.

It in the N-terminal section; belongs to the glycosyltransferase 51 family. In the C-terminal section; belongs to the transpeptidase family.

The protein localises to the cell inner membrane. It catalyses the reaction [GlcNAc-(1-&gt;4)-Mur2Ac(oyl-L-Ala-gamma-D-Glu-L-Lys-D-Ala-D-Ala)](n)-di-trans,octa-cis-undecaprenyl diphosphate + beta-D-GlcNAc-(1-&gt;4)-Mur2Ac(oyl-L-Ala-gamma-D-Glu-L-Lys-D-Ala-D-Ala)-di-trans,octa-cis-undecaprenyl diphosphate = [GlcNAc-(1-&gt;4)-Mur2Ac(oyl-L-Ala-gamma-D-Glu-L-Lys-D-Ala-D-Ala)](n+1)-di-trans,octa-cis-undecaprenyl diphosphate + di-trans,octa-cis-undecaprenyl diphosphate + H(+). The enzyme catalyses Preferential cleavage: (Ac)2-L-Lys-D-Ala-|-D-Ala. Also transpeptidation of peptidyl-alanyl moieties that are N-acyl substituents of D-alanine.. It participates in cell wall biogenesis; peptidoglycan biosynthesis. Its function is as follows. Cell wall formation. Synthesis of cross-linked peptidoglycan from the lipid intermediates. The enzyme has a penicillin-insensitive transglycosylase N-terminal domain (formation of linear glycan strands) and a penicillin-sensitive transpeptidase C-terminal domain (cross-linking of the peptide subunits). The protein is Penicillin-binding protein 1A (mrcA) of Pseudomonas aeruginosa (strain ATCC 15692 / DSM 22644 / CIP 104116 / JCM 14847 / LMG 12228 / 1C / PRS 101 / PAO1).